The sequence spans 548 residues: Chaperonin GroEL 2 (548 aa).

ATP is bound by residues Thr-30–Pro-33, Lys-51, Asp-87–Thr-91, Gly-415, and Asp-496. Residues Lys-529–Phe-548 are disordered. A compositionally biased stretch (gly residues) spans Gly-538–Phe-548.

It belongs to the chaperonin (HSP60) family. Forms a cylinder of 14 subunits composed of two heptameric rings stacked back-to-back. Interacts with the co-chaperonin GroES.

The protein localises to the cytoplasm. It catalyses the reaction ATP + H2O + a folded polypeptide = ADP + phosphate + an unfolded polypeptide.. In terms of biological role, together with its co-chaperonin GroES, plays an essential role in assisting protein folding. The GroEL-GroES system forms a nano-cage that allows encapsulation of the non-native substrate proteins and provides a physical environment optimized to promote and accelerate protein folding. In Rhodospirillum rubrum (strain ATCC 11170 / ATH 1.1.1 / DSM 467 / LMG 4362 / NCIMB 8255 / S1), this protein is Chaperonin GroEL 2.